The chain runs to 643 residues: Replication protein E1 (643 aa).

A disordered region spans residues 28-58 (THGQRQVSSDEDEDETETGEDLDFIDNRVPG). Over residues 36-51 (SDEDEDETETGEDLDF) the composition is skewed to acidic residues. Residues 84–86 (KRK) carry the Nuclear localization signal motif. A phosphoserine; by host mark is found at serine 90 and serine 103. Residues 102–111 (LSPRLDAISL) carry the Nuclear export signal motif. 2 disordered regions span residues 119–138 (KRRL…TQMV) and 143–181 (EEVT…PQSG). The tract at residues 180 to 346 (SGTDAAGSVL…QTLVGHSMED (167 aa)) is DNA-binding region. In terms of domain architecture, SF3 helicase spans 445–595 (VEFVSFLAAF…FPFASPGEPL (151 aa)). An ATP-binding site is contributed by 471–478 (GPADTGKS). Residue lysine 552 forms a Glycyl lysine isopeptide (Lys-Gly) (interchain with G-Cter in SUMO) linkage. Residues 617 to 643 (NSPEEQDDNGNTGEPFRCVPGDVARTV) form a disordered region.

The protein belongs to the papillomaviridae E1 protein family. Can form hexamers. Interacts with E2 protein; this interaction increases E1 DNA binding specificity. Interacts with host DNA polymerase subunit POLA2. Interacts with host single stranded DNA-binding protein RPA1. Interacts with host TOP1; this interaction stimulates the enzymatic activity of TOP1. Phosphorylated. Post-translationally, sumoylated.

The protein resides in the host nucleus. It catalyses the reaction Couples ATP hydrolysis with the unwinding of duplex DNA by translocating in the 3'-5' direction.. It carries out the reaction ATP + H2O = ADP + phosphate + H(+). ATP-dependent DNA 3'-5' helicase required for initiation of viral DNA replication. It forms a complex with the viral E2 protein. The E1-E2 complex binds to the replication origin which contains binding sites for both proteins. During the initial step, a dimer of E1 interacts with a dimer of protein E2 leading to a complex that binds the viral origin of replication with high specificity. Then, a second dimer of E1 displaces the E2 dimer in an ATP-dependent manner to form the E1 tetramer. Following this, two E1 monomers are added to each half of the site, which results in the formation of two E1 trimers on the viral ori. Subsequently, two hexamers will be created. The double hexamer acts as a bi-directional helicase machinery and unwinds the viral DNA and then recruits the host DNA polymerase to start replication. The polypeptide is Replication protein E1 (Human papillomavirus type 2a).